The sequence spans 453 residues: Tol-Pal system protein TolB (453 aa).

Residues 1–31 (MINNLSISMTKVIKIILAIIIILFNTLSIFA) form the signal peptide.

This sequence belongs to the TolB family. The Tol-Pal system is composed of five core proteins: the inner membrane proteins TolA, TolQ and TolR, the periplasmic protein TolB and the outer membrane protein Pal. They form a network linking the inner and outer membranes and the peptidoglycan layer.

Its subcellular location is the periplasm. In terms of biological role, part of the Tol-Pal system, which plays a role in outer membrane invagination during cell division and is important for maintaining outer membrane integrity. This is Tol-Pal system protein TolB from Orientia tsutsugamushi (strain Ikeda) (Rickettsia tsutsugamushi).